A 158-amino-acid polypeptide reads, in one-letter code: MKIIIQNQQDKYQIDESISKIIEDSVLNTLKIFMDDENYEISVMIVDNQFIKELNKHYRSIDKETDVLSFPIFEFKNGELQEDIAIVEEEIPLGDIVISIEKAYEQAKEFGHSVEREIAYLTVHSVLHLLGFDHIEEEDRMLMRKYEEMVLEGMGLTR.

Histidine 124, histidine 128, and histidine 134 together coordinate Zn(2+).

It belongs to the endoribonuclease YbeY family. The cofactor is Zn(2+).

The protein resides in the cytoplasm. In terms of biological role, single strand-specific metallo-endoribonuclease involved in late-stage 70S ribosome quality control and in maturation of the 3' terminus of the 16S rRNA. In Caldicellulosiruptor saccharolyticus (strain ATCC 43494 / DSM 8903 / Tp8T 6331), this protein is Endoribonuclease YbeY.